Reading from the N-terminus, the 447-residue chain is Trigger factor (447 aa).

The PPIase FKBP-type domain occupies 188–273 (GDKLVIDFEG…VNDIQVAEDF (86 aa)).

Belongs to the FKBP-type PPIase family. Tig subfamily.

The protein localises to the cytoplasm. It catalyses the reaction [protein]-peptidylproline (omega=180) = [protein]-peptidylproline (omega=0). Its function is as follows. Involved in protein export. Acts as a chaperone by maintaining the newly synthesized protein in an open conformation. Functions as a peptidyl-prolyl cis-trans isomerase. The chain is Trigger factor from Wolbachia sp. subsp. Brugia malayi (strain TRS).